The following is a 457-amino-acid chain: Glutamate--tRNA ligase 1 (457 aa).

A 'HIGH' region motif is present at residues 9-19; it reads PSPTGYIHIGN. The 'KMSKS' region signature appears at 250-254; it reads GLSKR. K253 is an ATP binding site.

Belongs to the class-I aminoacyl-tRNA synthetase family. Glutamate--tRNA ligase type 1 subfamily. Monomer.

It localises to the cytoplasm. The enzyme catalyses tRNA(Glu) + L-glutamate + ATP = L-glutamyl-tRNA(Glu) + AMP + diphosphate. Functionally, catalyzes the attachment of glutamate to tRNA(Glu) in a two-step reaction: glutamate is first activated by ATP to form Glu-AMP and then transferred to the acceptor end of tRNA(Glu). The protein is Glutamate--tRNA ligase 1 of Brucella ovis (strain ATCC 25840 / 63/290 / NCTC 10512).